Reading from the N-terminus, the 556-residue chain is Man(5)GlcNAc(2)-PP-dolichol translocation protein RFT1 (556 aa).

12 helical membrane passes run 10-30, 41-61, 91-111, 129-149, 156-176, 184-204, 353-373, 389-409, 440-460, 461-477, 489-509, and 517-537; these read LLGA…TFGI, EVLG…LFLS, LTVP…LNWL, VAFS…AQVF, ILLN…IVTG, AFAI…YGFF, SVLN…FTFG, FVAG…IYLL, VSFL…GFIF, ANCI…TYYI, LLGL…GIVC, and LATH…SWAL.

Belongs to the RFT1 family.

The protein resides in the endoplasmic reticulum membrane. It participates in protein modification; protein glycosylation. In terms of biological role, intramembrane glycolipid transporter that operates in the biosynthetic pathway of dolichol-linked oligosaccharides, the glycan precursors employed in protein asparagine (N)-glycosylation. The sequential addition of sugars to dolichol pyrophosphate produces dolichol-linked oligosaccharides containing fourteen sugars, including two GlcNAcs, nine mannoses and three glucoses. Once assembled, the oligosaccharide is transferred from the lipid to nascent proteins by oligosaccharyltransferases. The assembly of dolichol-linked oligosaccharides begins on the cytosolic side of the endoplasmic reticulum membrane and finishes in its lumen. RFT1 could mediate the translocation of the cytosolically oriented intermediate DolPP-GlcNAc2Man5, produced by ALG11, into the ER lumen where dolichol-linked oligosaccharides assembly continues. However, the intramembrane lipid transporter activity could not be confirmed in vitro. In Drosophila melanogaster (Fruit fly), this protein is Man(5)GlcNAc(2)-PP-dolichol translocation protein RFT1.